A 28-amino-acid chain; its full sequence is Ranatuerin-2LT (28 aa).

Cys23 and Cys28 are oxidised to a cystine.

In terms of tissue distribution, expressed by the skin glands.

It localises to the secreted. Its function is as follows. Has antibacterial activity. The chain is Ranatuerin-2LT from Rana latastei (Italian agile frog).